The sequence spans 670 residues: Sodium, potassium, lithium and rubidium/H(+) antiporter (670 aa).

The next 11 membrane-spanning stretches (helical) occupy residues 5 to 27 (LVVL…IPFI), 46 to 66 (GLHF…PLLF), 83 to 103 (PILL…GYTI), 105 to 125 (WMIP…LSPT), 156 to 176 (ASGL…AFSL), 182 to 202 (SFVF…FLII), 228 to 248 (FVIY…VVAG), 276 to 296 (IILF…IPDV), 314 to 334 (YILV…LFFW), 355 to 375 (LLIS…FSIP), and 389 to 409 (LILF…TVVL).

It belongs to the monovalent cation:proton antiporter 1 (CPA1) transporter (TC 2.A.36) family. Nhak (TC 2.A.36.3.2) subfamily.

It localises to the cell membrane. Its function is as follows. Transporter involved in the efflux of sodium, potassium, lithium and rubidium. This Bacillus subtilis (strain 168) protein is Sodium, potassium, lithium and rubidium/H(+) antiporter (nhaK).